The sequence spans 326 residues: Thioredoxin reductase (326 aa).

40 to 47 (TGNNKGGQ) is a binding site for FAD. C141 and C144 are disulfide-bonded. 291–300 (DVIDHVYKQA) serves as a coordination point for FAD.

This sequence belongs to the class-II pyridine nucleotide-disulfide oxidoreductase family. In terms of assembly, homodimer. FAD is required as a cofactor.

The protein resides in the cytoplasm. The enzyme catalyses [thioredoxin]-dithiol + NADP(+) = [thioredoxin]-disulfide + NADPH + H(+). The polypeptide is Thioredoxin reductase (trxB) (Buchnera aphidicola subsp. Baizongia pistaciae (strain Bp)).